The following is a 1379-amino-acid chain: DNA-directed RNA polymerase subunit beta'' (1379 aa).

The Zn(2+) site is built by Cys-220, Cys-291, Cys-298, and Cys-301.

It belongs to the RNA polymerase beta' chain family. RpoC2 subfamily. In plastids the minimal PEP RNA polymerase catalytic core is composed of four subunits: alpha, beta, beta', and beta''. When a (nuclear-encoded) sigma factor is associated with the core the holoenzyme is formed, which can initiate transcription. Zn(2+) serves as cofactor.

The protein resides in the plastid. The enzyme catalyses RNA(n) + a ribonucleoside 5'-triphosphate = RNA(n+1) + diphosphate. In terms of biological role, DNA-dependent RNA polymerase catalyzes the transcription of DNA into RNA using the four ribonucleoside triphosphates as substrates. This Cuscuta reflexa (Southern Asian dodder) protein is DNA-directed RNA polymerase subunit beta''.